A 286-amino-acid polypeptide reads, in one-letter code: Putative thiosulfate sulfurtransferase (286 aa).

The Rhodanese 1 domain maps to 27–134 (DDPAYRLVEV…WVDNDYPTTD (108 aa)). Glycyl lysine isopeptide (Lys-Gly) (interchain with G-Cter in SAMP2) cross-links involve residues Lys162 and Lys166. The 120-residue stretch at 164–283 (VDKGLPLVDV…WGNLVGAPVE (120 aa)) folds into the Rhodanese 2 domain. The active-site Cysteine persulfide intermediate is the Cys242. Arg247 provides a ligand contact to substrate.

It carries out the reaction thiosulfate + hydrogen cyanide = thiocyanate + sulfite + 2 H(+). Functionally, may be a sulfotransferase involved in the formation of thiosulfate. In Haloferax volcanii (strain ATCC 29605 / DSM 3757 / JCM 8879 / NBRC 14742 / NCIMB 2012 / VKM B-1768 / DS2) (Halobacterium volcanii), this protein is Putative thiosulfate sulfurtransferase (tssA).